The following is a 942-amino-acid chain: Mitogen-activated protein kinase kinase kinase 14 (942 aa).

Basic residues predominate over residues 136–152 (GKRHGKARKKRRKKRSK). 2 disordered regions span residues 136–156 (GKRH…SLAQ) and 291–326 (VSGQ…SCPS). The 256-residue stretch at 402–657 (MTHQPRVGRG…ELRRKVGKAL (256 aa)) folds into the Protein kinase domain. Residues 403–655 (THQPRVGRGS…AMELRRKVGK (253 aa)) are interaction with ZFP91. ATP is bound by residues 408-416 (VGRGSFGEV) and Lys431. The active-site Proton acceptor is the Asp517. At Thr561 the chain carries Phosphothreonine. Disordered regions lie at residues 660-756 (VGGL…FPDR) and 801-823 (SDDS…SSGV). Pro residues predominate over residues 707-720 (EPQPPLPPEPPEPS). Residues 809–823 (SKASQSSRDTLSSGV) show a composition bias toward polar residues.

Belongs to the protein kinase superfamily. STE Ser/Thr protein kinase family. MAP kinase kinase kinase subfamily. In terms of assembly, interacts with TRAF2, TRAF3, TRAF5, TRAF6, IKKA and NF-kappa-B2/P100. Interacts with PELI3. Interacts with NIBP; the interaction is direct. Interacts with ARRB1 and ARRB2. Interacts with GRB10. Interacts with ZFP91. Interacts with NLRP12; this interaction promotes proteasomal degradation of MAP3K14. Directly interacts with DDX3X. Interacts (via C-terminus and kinase domain) with PPPC3A (via N-terminus) and PPP3CB. Post-translationally, phosphorylation at Thr-561 is required to activate its kinase activity and 'Lys-63'-linked polyubiquitination. Phosphorylated by CHUK/IKKA leading to MAP3K14 destabilization. Autophosphorylated. Ubiquitinated. Undergoes both 'Lys-48'- and 'Lys-63'-linked polyubiquitination. 'Lys-48'-linked polyubiquitination leads to its degradation by the proteasome, while 'Lys-63'-linked polyubiquitination stabilizes and activates it.

It localises to the cytoplasm. It carries out the reaction L-seryl-[protein] + ATP = O-phospho-L-seryl-[protein] + ADP + H(+). The catalysed reaction is L-threonyl-[protein] + ATP = O-phospho-L-threonyl-[protein] + ADP + H(+). Its function is as follows. Lymphotoxin beta-activated kinase which seems to be exclusively involved in the activation of NF-kappa-B and its transcriptional activity. Phosphorylates CHUK/IKKA. Promotes proteolytic processing of NFKB2/P100, which leads to activation of NF-kappa-B via the non-canonical pathway. Has an essential role in the non-canonical NF-kappa-B signalining that regulates genes encoding molecules involved in B-cell survival, lymphoid organogenesis, and immune response. Could act in a receptor-selective manner. The sequence is that of Mitogen-activated protein kinase kinase kinase 14 from Mus musculus (Mouse).